Reading from the N-terminus, the 723-residue chain is Polyribonucleotide nucleotidyltransferase (723 aa).

Residues Asp-488 and Asp-494 each contribute to the Mg(2+) site. Positions 555-614 constitute a KH domain; that stretch reads PKIITLNIKPEKIKDVIGPGGKQINAIIEETGVKIDIEQDGTVYIASQDQAMNRKAIAII. The 69-residue stretch at 624 to 692 folds into the S1 motif domain; the sequence is GEVYTGKVRR…HQGRVNLSRK (69 aa). Positions 692–723 are disordered; sequence KALLEKKEQPEGDKKPQAEKKFYPKTKKPESK. The span at 693–723 shows a compositional bias: basic and acidic residues; it reads ALLEKKEQPEGDKKPQAEKKFYPKTKKPESK.

The protein belongs to the polyribonucleotide nucleotidyltransferase family. Mg(2+) serves as cofactor.

Its subcellular location is the cytoplasm. The enzyme catalyses RNA(n+1) + phosphate = RNA(n) + a ribonucleoside 5'-diphosphate. Involved in mRNA degradation. Catalyzes the phosphorolysis of single-stranded polyribonucleotides processively in the 3'- to 5'-direction. The sequence is that of Polyribonucleotide nucleotidyltransferase from Listeria welshimeri serovar 6b (strain ATCC 35897 / DSM 20650 / CCUG 15529 / CIP 8149 / NCTC 11857 / SLCC 5334 / V8).